The sequence spans 78 residues: Ubiquitin-like protein 1 (78 aa).

The protein belongs to the ubiquitin family.

This chain is Ubiquitin-like protein 1 (ubl1), found in Schizosaccharomyces pombe (strain 972 / ATCC 24843) (Fission yeast).